The sequence spans 562 residues: Putative transport protein ETA_21820 (562 aa).

Transmembrane regions (helical) follow at residues 8 to 28 (LLIGNHILLLFVVLALGLCLG), 32 to 52 (LGSVQLGNSIGVLVVSLLLGQ), 66 to 86 (FMLFIFCVGVEAGPNFFSIFF), 94 to 114 (MLAIVMVSSAMVLALGLGKLF), and 158 to 178 (HLSLGYALTYLVGLVSLIFGA). RCK C-terminal domains lie at 202–288 (LDPD…SFRN) and 290–373 (KEVF…RIGF). Helical transmembrane passes span 383–403 (LLAFCAFFILGLMIGMITFQF), 406–426 (FNFGIGNAAGLLFAGIMLGFL), 440–460 (ALTMVKEFGLMVFMAGVGLSA), 473–493 (LLMLGAGLIVSLVPVVICFLF), 503–523 (ALLFGAIMGARTCAPAMEIIS), and 540–560 (AIANVLLTLAGTLIVIIWPIL).

This sequence belongs to the AAE transporter (TC 2.A.81) family. YbjL subfamily.

Its subcellular location is the cell membrane. This is Putative transport protein ETA_21820 from Erwinia tasmaniensis (strain DSM 17950 / CFBP 7177 / CIP 109463 / NCPPB 4357 / Et1/99).